The following is a 515-amino-acid chain: uncharacterized protein (515 aa).

Disordered stretches follow at residues 117-188 (DNIL…RKSQ), 362-453 (RSTS…AESM), and 496-515 (GNAV…DYFN). Basic and acidic residues-rich tracts occupy residues 370–380 (KNVESETKQEE), 388–402 (PAED…EVIE), and 428–438 (PIKEIEDKVEP). Positions 502–515 (ADTESMDDFMDYFN) are enriched in acidic residues.

This is an uncharacterized protein from Ostreid herpesvirus 1 (isolate France) (OsHV-1).